Reading from the N-terminus, the 605-residue chain is Progranulin (605 aa).

A signal peptide spans 1-17 (MWTLVGWTILVAGLVAG). Disulfide bonds link C126-C139 and C133-C149. N-linked (GlcNAc...) asparagine glycosylation is present at N197. Intrachain disulfides connect C297–C309, C303–C319, C310–C327, C320–C334, C328–C341, and C335–C348. The interval 359-386 (QKTPAQPSRPSQPSPPGPPGPPSPPGPL) is disordered. Over residues 368 to 385 (PSQPSPPGPPGPPSPPGP) the composition is skewed to pro residues. 2 disulfide bridges follow: C392–C404 and C398–C414.

This sequence belongs to the granulin family. As to quaternary structure, progranulin is secreted as a homodimer. Interacts with SLPI; interaction protects progranulin from proteolysis. Interacts (via region corresponding to granulin-7 peptide) with CTSD; stabilizes CTSD and increases its proteolytic activity. Interacts (via region corresponding to granulin-7 peptide) with SORT1; this interaction mediates endocytosis and lysosome delivery of progranulin; interaction occurs at the neuronal cell surface in a stressed nervous system. Interacts with PSAP; facilitates lysosomal delivery of progranulin from the extracellular space and the biosynthetic pathway. Forms a complex with PSAP and M6PR; PSAP bridges the binding between progranulin and M6PR. Forms a complex with PSAP and SORT1; progranulin bridges the interaction between PSAP and SORT1; facilitates lysosomal targeting of PSAP via SORT1; interaction enhances PSAP uptake in primary cortical neurons. Interacts (via regions corresponding to granulin-2 and granulin-7 peptides) with GBA1; this interaction prevents aggregation of GBA1-SCARB2 complex via interaction with HSPA1A upon stress. Interacts (via region corresponding to granulin-7 peptide) with HSPA1A; mediates recruitment of HSPA1A to GBA1 and prevents GBA1 aggregation in response to stress. In terms of processing, cleaved by ELANE; proteolysis is blocked by SLPI and is concentration- and time-dependent and induces CXCL8/IL-8 production; granulin-3 and granulin-4 are resistant to ELANE. Cleaved by CTSL in lysosome thus regulating the maturation and turnover of progranulin within the lysosome.

It is found in the secreted. The protein localises to the lysosome. Its function is as follows. Secreted protein that acts as a key regulator of lysosomal function and as a growth factor involved in inflammation, wound healing and cell proliferation. Regulates protein trafficking to lysosomes, and also the activity of lysosomal enzymes. Also facilitates the acidification of lysosomes, causing degradation of mature CTSD by CTSB. In addition, functions as a wound-related growth factor that acts directly on dermal fibroblasts and endothelial cells to promote division, migration and the formation of capillary-like tubule structures. Also promotes epithelial cell proliferation by blocking TNF-mediated neutrophil activation preventing release of oxidants and proteases. Moreover, modulates inflammation in neurons by preserving neurons survival, axonal outgrowth and neuronal integrity. Functionally, inhibits epithelial cell proliferation and induces epithelial cells to secrete IL-8. Stabilizes CTSD through interaction with CTSD leading to maintain its aspartic-type peptidase activity. The polypeptide is Progranulin (GRN) (Cavia porcellus (Guinea pig)).